The primary structure comprises 66 residues: Small ribosomal subunit protein bS21 (66 aa).

Belongs to the bacterial ribosomal protein bS21 family.

This Solidesulfovibrio magneticus (strain ATCC 700980 / DSM 13731 / RS-1) (Desulfovibrio magneticus) protein is Small ribosomal subunit protein bS21.